The following is a 454-amino-acid chain: MQRYAVVLAAGKGTRMKSKLYKVLHKVADKTMIEHVVNSVQQSGADQIVTIVGHGAERVKDTLGDQSAYGFQEEQLGTAHAVKMAADELKDREGTTLVVCGDTPLITADTLNALVKHHEDNQADATVLSATAPNPFGYGRIVRDEEGRLSNIVEQKDASEAEQQIDEISSGIFAFDNQTLFRLLDKVKNDNAQGEYYLPDVLSLILEEGGKAEVYHTNDFDEIMGVNDRVALSKAEQAMRQRINEYHMRNGVTLIDPSSTYIASDVIIGMDTVIEPGVHIGSGTQIGEDTVIGQYSDINRSTIGDRTTVKQSVINDATVGDDTTVGPFAQLRPNAHLGNEVKVGNFVEVKKADIKDGAKVSHLSYIGDAEIGERTNIGCGSITVNYDGKNKFKTIIGKDSFIGCNTNLVAPVILGDDVLIAAGSTITDDVPNDSLALARSRQTTKPGYLNKNKE.

The interval 1 to 229 (MQRYAVVLAA…FDEIMGVNDR (229 aa)) is pyrophosphorylase. UDP-N-acetyl-alpha-D-glucosamine-binding positions include 8–11 (LAAG), Lys-22, Gln-72, and 77–78 (GT). Asp-102 contributes to the Mg(2+) binding site. Residues Gly-139, Glu-154, and Asn-227 each contribute to the UDP-N-acetyl-alpha-D-glucosamine site. Asn-227 contributes to the Mg(2+) binding site. A linker region spans residues 230–250 (VALSKAEQAMRQRINEYHMRN). An N-acetyltransferase region spans residues 251–454 (GVTLIDPSST…KPGYLNKNKE (204 aa)). Positions 332 and 350 each coordinate UDP-N-acetyl-alpha-D-glucosamine. Catalysis depends on His-362, which acts as the Proton acceptor. The UDP-N-acetyl-alpha-D-glucosamine site is built by Tyr-365 and Asn-376. Acetyl-CoA-binding positions include 385-386 (NY), Ala-422, and Arg-439.

This sequence in the N-terminal section; belongs to the N-acetylglucosamine-1-phosphate uridyltransferase family. It in the C-terminal section; belongs to the transferase hexapeptide repeat family. Homotrimer. Mg(2+) serves as cofactor.

Its subcellular location is the cytoplasm. It catalyses the reaction alpha-D-glucosamine 1-phosphate + acetyl-CoA = N-acetyl-alpha-D-glucosamine 1-phosphate + CoA + H(+). It carries out the reaction N-acetyl-alpha-D-glucosamine 1-phosphate + UTP + H(+) = UDP-N-acetyl-alpha-D-glucosamine + diphosphate. It functions in the pathway nucleotide-sugar biosynthesis; UDP-N-acetyl-alpha-D-glucosamine biosynthesis; N-acetyl-alpha-D-glucosamine 1-phosphate from alpha-D-glucosamine 6-phosphate (route II): step 2/2. It participates in nucleotide-sugar biosynthesis; UDP-N-acetyl-alpha-D-glucosamine biosynthesis; UDP-N-acetyl-alpha-D-glucosamine from N-acetyl-alpha-D-glucosamine 1-phosphate: step 1/1. Its pathway is bacterial outer membrane biogenesis; LPS lipid A biosynthesis. Catalyzes the last two sequential reactions in the de novo biosynthetic pathway for UDP-N-acetylglucosamine (UDP-GlcNAc). The C-terminal domain catalyzes the transfer of acetyl group from acetyl coenzyme A to glucosamine-1-phosphate (GlcN-1-P) to produce N-acetylglucosamine-1-phosphate (GlcNAc-1-P), which is converted into UDP-GlcNAc by the transfer of uridine 5-monophosphate (from uridine 5-triphosphate), a reaction catalyzed by the N-terminal domain. The sequence is that of Bifunctional protein GlmU from Staphylococcus carnosus (strain TM300).